The chain runs to 533 residues: CTP synthase (533 aa).

The segment at 1–268 (MGETKYIFVT…DETILQKMGL (268 aa)) is amidoligase domain. S15 is a binding site for CTP. S15 contacts UTP. 16 to 21 (SLGKGI) lines the ATP pocket. Residue Y56 participates in L-glutamine binding. D73 is an ATP binding site. Positions 73 and 143 each coordinate Mg(2+). Residues 150–152 (DIE), 189–194 (KTKPTQ), and K225 each bind CTP. Residues 189–194 (KTKPTQ) and K225 each bind UTP. In terms of domain architecture, Glutamine amidotransferase type-1 spans 301–533 (YVELQDAYKS…VSFIKAAIDK (233 aa)). G356 is a binding site for L-glutamine. The active-site Nucleophile; for glutamine hydrolysis is the C383. Residues 384–387 (LGMQ), E407, and R464 contribute to the L-glutamine site. Residues H509 and E511 contribute to the active site.

This sequence belongs to the CTP synthase family. Homotetramer.

The catalysed reaction is UTP + L-glutamine + ATP + H2O = CTP + L-glutamate + ADP + phosphate + 2 H(+). It catalyses the reaction L-glutamine + H2O = L-glutamate + NH4(+). It carries out the reaction UTP + NH4(+) + ATP = CTP + ADP + phosphate + 2 H(+). It functions in the pathway pyrimidine metabolism; CTP biosynthesis via de novo pathway; CTP from UDP: step 2/2. With respect to regulation, allosterically activated by GTP, when glutamine is the substrate; GTP has no effect on the reaction when ammonia is the substrate. The allosteric effector GTP functions by stabilizing the protein conformation that binds the tetrahedral intermediate(s) formed during glutamine hydrolysis. Inhibited by the product CTP, via allosteric rather than competitive inhibition. In terms of biological role, catalyzes the ATP-dependent amination of UTP to CTP with either L-glutamine or ammonia as the source of nitrogen. Regulates intracellular CTP levels through interactions with the four ribonucleotide triphosphates. The sequence is that of CTP synthase from Bacteroides fragilis (strain YCH46).